The sequence spans 434 residues: MALFPLHHEVPCKGEVLFDSNGLRRFSSGLKHRTMAEATTLGRDCRMKSYMKSIPYCRSPRRRLCLVRASSENKITKQRLKLLDSYFGKLQNDDEKPSISTGDDIDRKAELNVNEELDSLSAYLDKLQKDAKSKGLVSSTLDVVKSEGGSVASKLRKTGIENNNSPFQQFDDEDQAEDTLNFYAVSILASINVGVCLFEAAAPVRNNNMGLLSLPLLYGAKINDLILAGEWWRLVTPMFLHSGIPHVALSSWALLTFGPKVCRDYGLFTFCLIYILGGVSGNFMSFLHTADPTVGGTGPAFALIGAWLVDQNQNKEMIKSNEYEDLFQKAIIMTGFGLILSHFGPIDDWTNLGALIAGIVYGFFTCPVLQLGSGGSERQEGIVTVGPEKQNSADPCKSFLLFTIFVAVIVTSLLLIGDGPLDFPTYDDVVYSLI.

A chloroplast-targeting transit peptide spans 1-68 (MALFPLHHEV…SPRRRLCLVR (68 aa)). The next 8 membrane-spanning stretches (helical) occupy residues 182–202 (FYAVSILASINVGVCLFEAAA), 209–229 (MGLLSLPLLYGAKINDLILAG), 238–258 (MFLHSGIPHVALSSWALLTFG), 267–287 (LFTFCLIYILGGVSGNFMSFL), 289–309 (TADPTVGGTGPAFALIGAWLV), 326–346 (LFQKAIIMTGFGLILSHFGPI), 352–372 (LGALIAGIVYGFFTCPVLQLG), and 399–419 (FLLFTIFVAVIVTSLLLIGDG).

The protein belongs to the peptidase S54 family.

It localises to the plastid. The protein resides in the chloroplast membrane. Its function is as follows. Probable rhomboid-type serine protease that catalyzes intramembrane proteolysis. This chain is RHOMBOID-like protein 9, chloroplastic, found in Arabidopsis thaliana (Mouse-ear cress).